The chain runs to 378 residues: UPF0754 membrane protein BCE33L0760 (378 aa).

2 consecutive transmembrane segments (helical) span residues 1–21 (MNIWLSMLTTTGLGAIIGGFT) and 357–377 (YLGALLGGMIGIVQGLLLLFL).

The protein belongs to the UPF0754 family.

The protein localises to the cell membrane. The chain is UPF0754 membrane protein BCE33L0760 from Bacillus cereus (strain ZK / E33L).